A 142-amino-acid chain; its full sequence is Large ribosomal subunit protein uL11 (142 aa).

It belongs to the universal ribosomal protein uL11 family. Part of the ribosomal stalk of the 50S ribosomal subunit. Interacts with L10 and the large rRNA to form the base of the stalk. L10 forms an elongated spine to which L12 dimers bind in a sequential fashion forming a multimeric L10(L12)X complex. One or more lysine residues are methylated.

Its function is as follows. Forms part of the ribosomal stalk which helps the ribosome interact with GTP-bound translation factors. The protein is Large ribosomal subunit protein uL11 of Vibrio vulnificus (strain YJ016).